A 144-amino-acid polypeptide reads, in one-letter code: Eukaryotic translation initiation factor 1A (144 aa).

A compositionally biased stretch (basic residues) spans 1-15 (MPKNKGKGGKNRKRG). Disordered stretches follow at residues 1–25 (MPKNKGKGGKNRKRGKNEADDDKRE) and 120–144 (DVDGPEEGEGDSDYIQFEDEDIDKI). Over residues 16–25 (KNEADDDKRE) the composition is skewed to basic and acidic residues. The 75-residue stretch at 22–96 (DKRELVFKED…DKADVILKYM (75 aa)) folds into the S1-like domain.

The protein belongs to the eIF-1A family.

Seems to be required for maximal rate of protein biosynthesis. Enhances ribosome dissociation into subunits and stabilizes the binding of the initiator Met-tRNA(I) to 40 S ribosomal subunits. This is Eukaryotic translation initiation factor 1A from Triticum aestivum (Wheat).